A 606-amino-acid polypeptide reads, in one-letter code: Gamma-aminobutyric acid receptor subunit beta (606 aa).

A signal peptide spans 1-44 (MSDSKMDKLARMAPLPRTPLLTIWLAINMALIAQETGHKRIHTV). Residues 45-268 (QAATGGGSML…CEIQFVRSMG (224 aa)) are Extracellular-facing. N-linked (GlcNAc...) asparagine glycosylation occurs at asparagine 58. Cysteine 185 and cysteine 199 are oxidised to a cystine. The N-linked (GlcNAc...) asparagine glycan is linked to asparagine 253. The next 3 helical transmembrane spans lie at 269–291 (YYLI…SFWL), 297–316 (PARV…LMSS), and 333–356 (YLGT…YMAK). Over 357–568 (RIQMRKQRFM…LGITPSDIDK (212 aa)) the chain is Cytoplasmic. 2 disordered regions span residues 376 to 451 (KQQL…VSNR) and 482 to 542 (HDPK…AAVP). Residues 381 to 395 (GANQQQANPNPNANV) show a composition bias toward low complexity. Positions 396–425 (GGPGGVGVGPGGPGGPGGGVNVGVGMGMGP) are enriched in gly residues. Over residues 430-443 (GHGHHAHSHGHPHA) the composition is skewed to basic residues. A compositionally biased stretch (gly residues) spans 499–536 (GGRGGPQSHGPGPGQGGGPPGGGGGGGGGGGPPEGGGD). A helical transmembrane segment spans residues 569 to 590 (YSRIVFPVCFVCFNLMYWIIYL).

It belongs to the ligand-gated ion channel (TC 1.A.9) family. Gamma-aminobutyric acid receptor (TC 1.A.9.5) subfamily.

It is found in the postsynaptic cell membrane. The protein resides in the cell membrane. GABA, an inhibitory neurotransmitter, mediates neuronal inhibition by binding to the GABA receptor and opening an integral chloride channel. The protein is Gamma-aminobutyric acid receptor subunit beta (Rdl) of Drosophila simulans (Fruit fly).